The primary structure comprises 264 residues: 3-methyl-2-oxobutanoate hydroxymethyltransferase 2 (264 aa).

Mg(2+) contacts are provided by Asp-44 and Asp-83. 3-methyl-2-oxobutanoate is bound by residues 44-45, Asp-83, and Lys-111; that span reads DS. Glu-113 contributes to the Mg(2+) binding site. Glu-180 serves as the catalytic Proton acceptor.

This sequence belongs to the PanB family. Homodecamer; pentamer of dimers. It depends on Mg(2+) as a cofactor.

The protein localises to the cytoplasm. The enzyme catalyses 3-methyl-2-oxobutanoate + (6R)-5,10-methylene-5,6,7,8-tetrahydrofolate + H2O = 2-dehydropantoate + (6S)-5,6,7,8-tetrahydrofolate. It functions in the pathway cofactor biosynthesis; (R)-pantothenate biosynthesis; (R)-pantoate from 3-methyl-2-oxobutanoate: step 1/2. Functionally, catalyzes the reversible reaction in which hydroxymethyl group from 5,10-methylenetetrahydrofolate is transferred onto alpha-ketoisovalerate to form ketopantoate. This chain is 3-methyl-2-oxobutanoate hydroxymethyltransferase 2, found in Hahella chejuensis (strain KCTC 2396).